The sequence spans 49 residues: Large ribosomal subunit protein bL33 (49 aa).

It belongs to the bacterial ribosomal protein bL33 family.

This Clostridium botulinum (strain ATCC 19397 / Type A) protein is Large ribosomal subunit protein bL33.